The following is a 458-amino-acid chain: tRNA modification GTPase MnmE (458 aa).

(6S)-5-formyl-5,6,7,8-tetrahydrofolate is bound by residues R26, E88, and R127. Positions 224-378 (GLSTAIIGRP…IEDRINQLFF (155 aa)) constitute a TrmE-type G domain. Residue N234 coordinates K(+). Residues 234-239 (NVGKSS), 253-259 (TDIAGTT), and 278-281 (DTAG) contribute to the GTP site. Mg(2+) is bound at residue S238. Residues T253, I255, and T258 each coordinate K(+). T259 is a binding site for Mg(2+). K458 lines the (6S)-5-formyl-5,6,7,8-tetrahydrofolate pocket.

Belongs to the TRAFAC class TrmE-Era-EngA-EngB-Septin-like GTPase superfamily. TrmE GTPase family. Homodimer. Heterotetramer of two MnmE and two MnmG subunits. K(+) is required as a cofactor.

It localises to the cytoplasm. Its function is as follows. Exhibits a very high intrinsic GTPase hydrolysis rate. Involved in the addition of a carboxymethylaminomethyl (cmnm) group at the wobble position (U34) of certain tRNAs, forming tRNA-cmnm(5)s(2)U34. This chain is tRNA modification GTPase MnmE, found in Streptococcus pyogenes serotype M12 (strain MGAS9429).